A 560-amino-acid chain; its full sequence is Nucleoprotein (560 aa).

Residues 54 to 236 (LRKSKRGDTD…ITKDESALNI (183 aa)) form a binding site for the cap structure m7GTP region. Asp380 and Glu382 together coordinate Mn(2+). The Zn(2+) site is built by Glu390, Cys497, His500, and Cys521. Asp525 provides a ligand contact to Mn(2+).

This sequence belongs to the arenaviridae nucleocapsid protein family. As to quaternary structure, homomultimerizes to form the nucleocapsid. Binds to viral genomic RNA. Interacts with glycoprotein G2. Interacts with protein Z; this interaction probably directs the encapsidated genome to budding sites. Interacts with protein L; this interaction does not interfere with Z-L interaction. Interacts with host IKBKE (via Protein kinase domain); the interaction inhibits IKBKE kinase activity.

It is found in the virion. The protein localises to the host cytoplasm. Functionally, encapsidates the genome, protecting it from nucleases. The encapsidated genomic RNA is termed the nucleocapsid (NC). Serves as template for viral transcription and replication. The increased presence of protein N in host cell does not seem to trigger the switch from transcription to replication as observed in other negative strain RNA viruses. Through the interaction with host IKBKE, strongly inhibits the phosphorylation and nuclear translocation of host IRF3, a protein involved in interferon activation pathway, leading to the inhibition of interferon-beta and IRF3-dependent promoters activation. Also encodes a functional 3'-5' exoribonuclease that degrades preferentially dsRNA substrates and thereby participates in the suppression of interferon induction. This Homo sapiens (Human) protein is Nucleoprotein.